Consider the following 207-residue polypeptide: Putative zinc finger protein 137 (207 aa).

Residues C72 to H94 form a C2H2-type 1 zinc finger. A C2H2-type 2; degenerate zinc finger spans residues Y100–H122. A C2H2-type 3; degenerate zinc finger spans residues Y128–H150. C2H2-type zinc fingers lie at residues H156 to H178 and Y184 to H206.

It belongs to the krueppel C2H2-type zinc-finger protein family.

The protein localises to the nucleus. In terms of biological role, may be involved in transcriptional regulation. The sequence is that of Putative zinc finger protein 137 (ZNF137P) from Homo sapiens (Human).